Consider the following 310-residue polypeptide: Aspartate carbamoyltransferase catalytic subunit (310 aa).

Positions 55 and 56 each coordinate carbamoyl phosphate. An L-aspartate-binding site is contributed by Lys-85. Arg-106, His-135, and Gln-138 together coordinate carbamoyl phosphate. 2 residues coordinate L-aspartate: Arg-168 and Arg-230. The carbamoyl phosphate site is built by Leu-268 and Pro-269.

It belongs to the aspartate/ornithine carbamoyltransferase superfamily. ATCase family. As to quaternary structure, heterododecamer (2C3:3R2) of six catalytic PyrB chains organized as two trimers (C3), and six regulatory PyrI chains organized as three dimers (R2).

It carries out the reaction carbamoyl phosphate + L-aspartate = N-carbamoyl-L-aspartate + phosphate + H(+). It participates in pyrimidine metabolism; UMP biosynthesis via de novo pathway; (S)-dihydroorotate from bicarbonate: step 2/3. Functionally, catalyzes the condensation of carbamoyl phosphate and aspartate to form carbamoyl aspartate and inorganic phosphate, the committed step in the de novo pyrimidine nucleotide biosynthesis pathway. This chain is Aspartate carbamoyltransferase catalytic subunit, found in Buchnera aphidicola subsp. Acyrthosiphon pisum (strain 5A).